Consider the following 607-residue polypeptide: Bifunctional endo-1,4-beta-xylanase A (607 aa).

The first 18 residues, 1 to 18 (MRTIKFFFAVAIATVAKA), serve as a signal peptide directing secretion. Residues 35–242 (NGQTQHKGVA…SSGIADVTKL (208 aa)) enclose the GH11 1 domain. Glutamate 141 acts as the Nucleophile in catalysis. Glutamate 223 functions as the Proton donor in the catalytic mechanism. The segment covering 248-272 (QKGSNPAPTSTGTVPSSSAGGSTAN) has biased composition (polar residues). Positions 248 to 284 (QKGSNPAPTSTGTVPSSSAGGSTANGKKFTVGNGQNQ) are disordered. In terms of domain architecture, GH11 2 spans 280–487 (NGQNQHKGVN…SSGVADVTLL (208 aa)). Glutamate 386 serves as the catalytic Nucleophile. Glutamate 474 functions as the Proton donor in the catalytic mechanism. The disordered stretch occupies residues 493–514 (PKGSSPATSAAPRTTTRTTTRT). The segment covering 496-514 (SSPATSAAPRTTTRTTTRT) has biased composition (low complexity). CBM10 domains lie at 523-563 (KCSA…CGCG) and 566-606 (QCSS…CGCG).

Belongs to the glycosyl hydrolase 11 (cellulase G) family.

It catalyses the reaction Endohydrolysis of (1-&gt;4)-beta-D-xylosidic linkages in xylans.. It functions in the pathway glycan degradation; xylan degradation. Functionally, hydrolyzes xylans into xylobiose and xylose. In Neocallimastix patriciarum (Rumen fungus), this protein is Bifunctional endo-1,4-beta-xylanase A (XYNA).